A 70-amino-acid polypeptide reads, in one-letter code: Conotoxin Lt11.6 (70 aa).

The first 26 residues, 1–26 (MMFRLTSVGSFLLVIVFLNLVVLTNA), serve as a signal peptide directing secretion. Cystine bridges form between cysteine 27–cysteine 41, cysteine 34–cysteine 46, cysteine 40–cysteine 50, and cysteine 45–cysteine 54. Positions 58-70 (AQRQKLLRSFGQR) are excised as a propeptide.

The protein belongs to the conotoxin I2 superfamily. As to expression, expressed by the venom duct.

It localises to the secreted. The sequence is that of Conotoxin Lt11.6 from Conus litteratus (Lettered cone).